We begin with the raw amino-acid sequence, 96 residues long: Small ribosomal subunit protein bS6 (96 aa).

The protein belongs to the bacterial ribosomal protein bS6 family.

Binds together with bS18 to 16S ribosomal RNA. The protein is Small ribosomal subunit protein bS6 of Bacillus thuringiensis subsp. konkukian (strain 97-27).